The primary structure comprises 392 residues: Major outer membrane porin (392 aa).

The N-terminal stretch at 1 to 22 (MKKLLKSALLFAAAGSALSLQA) is a signal peptide.

The protein belongs to the chlamydial porin (CP) (TC 1.B.2) family. Part of a disulfide cross-linked outer membrane complex (COMC) composed of the major outer membrane porin (MOMP), the small cysteine-rich protein (OmcA) and the large cysteine-rich periplasmic protein (OmcB).

The protein localises to the cell outer membrane. In terms of biological role, in elementary bodies (EBs, the infectious stage, which is able to survive outside the host cell) provides the structural integrity of the outer envelope through disulfide cross-links with the small cysteine-rich protein and the large cysteine-rich periplasmic protein. It has been described in publications as the Sarkosyl-insoluble COMC (Chlamydia outer membrane complex), and serves as the functional equivalent of peptidoglycan. Permits diffusion of specific solutes through the outer membrane. This chain is Major outer membrane porin (ompA), found in Chlamydia psittaci (Chlamydophila psittaci).